Consider the following 275-residue polypeptide: MALVKLKPTSAGRRGMVKVVNPDLYKGRPHDALTEKKTSKAGRNNSGRVTVRHQGGGHKMHYRVIDFRRNKDGIAAKVERIEYDPNRSANIALLCYADGERRYIIAPRGVEVGQQLMSGAEAPIKAGNALPIRNIPVGSTIHCVEMMPGKGAQIARAAGTSVQLLAREGAYAQLRLRSGEIRRVHVECRATIGEVGNEEHSLRKIGKAGANRWRGIRPTVRGVAMNPVDHPHGGGEGRTGEGRVPVSPWGTPAKGYRTRRNKRTDNMIVQRRHKR.

Disordered stretches follow at residues 24–54 and 223–275; these read LYKGRPHDALTEKKTSKAGRNNSGRVTVRHQ and VAMN…RHKR. Composition is skewed to basic and acidic residues over residues 25-38 and 229-241; these read YKGRPHDALTEKKT and DHPHGGGEGRTGE.

The protein belongs to the universal ribosomal protein uL2 family. As to quaternary structure, part of the 50S ribosomal subunit. Forms a bridge to the 30S subunit in the 70S ribosome.

One of the primary rRNA binding proteins. Required for association of the 30S and 50S subunits to form the 70S ribosome, for tRNA binding and peptide bond formation. It has been suggested to have peptidyltransferase activity; this is somewhat controversial. Makes several contacts with the 16S rRNA in the 70S ribosome. This is Large ribosomal subunit protein uL2 from Azoarcus sp. (strain BH72).